A 266-amino-acid polypeptide reads, in one-letter code: Interleukin-1 beta (266 aa).

Residues 1-114 (MAAVPELTSE…KTDADNFMSD (114 aa)) constitute a propeptide that is removed on maturation.

It belongs to the IL-1 family. Monomer. In its precursor form, weakly interacts with full-length MEFV; the mature cytokine does not interact at all. Interacts with integrins ITGAV:ITGBV and ITGA5:ITGB1; integrin-binding is required for IL1B signaling. Interacts with cargo receptor TMED10; the interaction is direct and is required for the secretion of IL1B mature form. Interacts with HSP90AB1; the interaction facilitates cargo translocation into the ERGIC. Interacts with HSP90B1; the interaction facilitates cargo translocation into the ERGIC.

Its subcellular location is the cytoplasm. The protein localises to the cytosol. It is found in the secreted. The protein resides in the lysosome. It localises to the extracellular exosome. In terms of biological role, potent pro-inflammatory cytokine. Initially discovered as the major endogenous pyrogen, induces prostaglandin synthesis, neutrophil influx and activation, T-cell activation and cytokine production, B-cell activation and antibody production, and fibroblast proliferation and collagen production. Promotes Th17 differentiation of T-cells. Synergizes with IL12/interleukin-12 to induce IFNG synthesis from T-helper 1 (Th1) cells. Plays a role in angiogenesis by inducing VEGF production synergistically with TNF and IL6. Involved in transduction of inflammation downstream of pyroptosis: its mature form is specifically released in the extracellular milieu by passing through the gasdermin-D (GSDMD) pore. In Canis lupus familiaris (Dog), this protein is Interleukin-1 beta (IL1B).